We begin with the raw amino-acid sequence, 1342 residues long: ATP-dependent RNA helicase TDRD9 (1342 aa).

Residues 31–63 show a composition bias toward basic and acidic residues; that stretch reads KAEAEDNATEVRSDKAFSELSSPEKEKSDDGNQ. Residues 31–81 are disordered; sequence KAEAEDNATEVRSDKAFSELSSPEKEKSDDGNQRRKRAQLPTGPGTSPPSL. One can recognise a Helicase ATP-binding domain in the interval 99–265; it reads VSLIENNSVV…FGSPIRNQMN (167 aa). Residue 112 to 119 participates in ATP binding; the sequence is GATGSGKT. Residues 211–214 carry the DEAH box motif; that stretch reads DEVH. Positions 317–503 constitute a Helicase C-terminal domain; the sequence is SLIQSFDEME…LLKVKLLDMG (187 aa). Residues 901–962 enclose the Tudor domain; it reads SLYPNLLCVA…RELPSDLMTP (62 aa).

Belongs to the DEAD box helicase family. DEAH subfamily.

It localises to the cytoplasm. The protein resides in the nucleus. The enzyme catalyses ATP + H2O = ADP + phosphate + H(+). Its function is as follows. ATP-binding RNA helicase which plays a central role during spermatogenesis by repressing transposable elements and preventing their mobilization, which is essential for the germline integrity. Acts via the piRNA metabolic process, which mediates the repression of transposable elements during meiosis by forming complexes composed of piRNAs and Piwi proteins and governs the methylation and subsequent repression of transposons. Acts downstream of piRNA biogenesis: exclusively required for transposon silencing in the nucleus, suggesting that it acts as a nuclear effector in the nucleus together with piwil4. This chain is ATP-dependent RNA helicase TDRD9, found in Danio rerio (Zebrafish).